The primary structure comprises 79 residues: uncharacterized protein (79 aa).

A signal peptide spans 1–20 (MSQLMGIITRLQSLQETAEA).

This is an uncharacterized protein from Bacillus subtilis (strain 168).